The following is a 327-amino-acid chain: Regulatory protein MsrR (327 aa).

A compositionally biased stretch (basic and acidic residues) spans 1–18 (MDKETNDNEYRRQSEHRT). The disordered stretch occupies residues 1–24 (MDKETNDNEYRRQSEHRTSAPKRK). Over 1–31 (MDKETNDNEYRRQSEHRTSAPKRKKKKKIRK) the chain is Cytoplasmic. A helical; Signal-anchor for type II membrane protein transmembrane segment spans residues 32-52 (LPIILLIVVILLIALVVYIVH). At 53 to 327 (SYNSGVEYAK…QAIKDFLDED (275 aa)) the chain is on the extracellular side.

It belongs to the LytR/CpsA/Psr (LCP) family.

It localises to the cell membrane. Its function is as follows. Involved in SarA attenuation. Affects resistance to oxacillin and teicoplanin, as well as the synthesis of virulence factors. The protein is Regulatory protein MsrR (msrR) of Staphylococcus aureus (strain NCTC 8325 / PS 47).